Consider the following 315-residue polypeptide: Prephenate dehydratase (315 aa).

Residues 3–189 (RIAYLGPEGT…ARTRFLLIGV (187 aa)) enclose the Prephenate dehydratase domain. Positions 203 to 280 (SVVLRIANVP…ADVRYLGSWP (78 aa)) constitute an ACT domain.

In terms of assembly, homodimer.

The enzyme catalyses prephenate + H(+) = 3-phenylpyruvate + CO2 + H2O. It participates in amino-acid biosynthesis; L-phenylalanine biosynthesis; phenylpyruvate from prephenate: step 1/1. The sequence is that of Prephenate dehydratase (pheA) from Mycobacterium marinum (strain ATCC BAA-535 / M).